Reading from the N-terminus, the 42-residue chain is Large ribosomal subunit protein eL32 (42 aa).

The protein belongs to the eukaryotic ribosomal protein eL32 family.

The polypeptide is Large ribosomal subunit protein eL32 (RPL32) (Zea mays (Maize)).